The sequence spans 1466 residues: DNA-directed RNA polymerase subunit beta'' (1466 aa).

Residues C220, C296, C303, and C306 each contribute to the Zn(2+) site. The segment at 618-725 (TREEDLEDEY…EDEYDSSEED (108 aa)) is disordered. Composition is skewed to acidic residues over residues 621–631 (EDLEDEYETLE), 639–651 (DEYE…DEYG), and 707–725 (LEED…SEED).

Belongs to the RNA polymerase beta' chain family. RpoC2 subfamily. In terms of assembly, in plastids the minimal PEP RNA polymerase catalytic core is composed of four subunits: alpha, beta, beta', and beta''. When a (nuclear-encoded) sigma factor is associated with the core the holoenzyme is formed, which can initiate transcription. The cofactor is Zn(2+).

The protein localises to the plastid. It is found in the chloroplast. The enzyme catalyses RNA(n) + a ribonucleoside 5'-triphosphate = RNA(n+1) + diphosphate. DNA-dependent RNA polymerase catalyzes the transcription of DNA into RNA using the four ribonucleoside triphosphates as substrates. The sequence is that of DNA-directed RNA polymerase subunit beta'' from Agrostis stolonifera (Creeping bentgrass).